Here is a 344-residue protein sequence, read N- to C-terminus: AP2/ERF and B3 domain-containing transcription factor RAV1 (344 aa).

The span at 1-15 shows a compositional bias: low complexity; that stretch reads MESSSVDESTTSTGS. Residues 1 to 22 are disordered; it reads MESSSVDESTTSTGSICETPAI. The segment at residues 61–116 is a DNA-binding region (AP2/ERF); the sequence is KYKGVVPQPNGRWGAQIYEKHQRVWLGTFNEEDEAARAYDVAVHRFRRRDAVTNFK. Positions 148–169 are disordered; sequence ELEQSKRRRNGNGNMTRTLLTS. Residues 188 to 292 constitute a DNA-binding region (TF-B3); it reads FEKAVTPSDV…QLYIGWKSRS (105 aa).

It belongs to the AP2/ERF transcription factor family. RAV subfamily. In terms of assembly, monomer. Expressed in all tissues examined: Roots, rosette leaves, cauline leaves, inflorescence stems, flowers and siliques. Highest expression in roots and rosette leaves. Very low expression in flowers.

The protein resides in the nucleus. Its function is as follows. Binds specifically to bipartite recognition sequences composed of two unrelated motifs, 5'-CAACA-3' and 5'-CACCTG-3'. May function as negative regulator of plant growth and development. In Arabidopsis thaliana (Mouse-ear cress), this protein is AP2/ERF and B3 domain-containing transcription factor RAV1 (RAV1).